The primary structure comprises 97 residues: Large ribosomal subunit protein bL28 (97 aa).

The protein belongs to the bacterial ribosomal protein bL28 family.

The polypeptide is Large ribosomal subunit protein bL28 (Rickettsia rickettsii (strain Iowa)).